Consider the following 263-residue polypeptide: Glucosamine-6-phosphate deaminase (263 aa).

The active-site Proton acceptor; for enolization step is the D72. D141 serves as the catalytic For ring-opening step. The active-site Proton acceptor; for ring-opening step is the H143. E148 acts as the For ring-opening step in catalysis.

Belongs to the glucosamine/galactosamine-6-phosphate isomerase family. NagB subfamily.

The catalysed reaction is alpha-D-glucosamine 6-phosphate + H2O = beta-D-fructose 6-phosphate + NH4(+). It participates in amino-sugar metabolism; N-acetylneuraminate degradation; D-fructose 6-phosphate from N-acetylneuraminate: step 5/5. Its activity is regulated as follows. Allosterically activated by N-acetylglucosamine 6-phosphate (GlcNAc6P). Its function is as follows. Catalyzes the reversible isomerization-deamination of glucosamine 6-phosphate (GlcN6P) to form fructose 6-phosphate (Fru6P) and ammonium ion. This Porphyromonas gingivalis (strain ATCC 33277 / DSM 20709 / CIP 103683 / JCM 12257 / NCTC 11834 / 2561) protein is Glucosamine-6-phosphate deaminase.